The primary structure comprises 270 residues: Putative phosphoenolpyruvate synthase regulatory protein (270 aa).

149–156 (GVSRSGKT) is a binding site for ADP.

It belongs to the pyruvate, phosphate/water dikinase regulatory protein family. PSRP subfamily.

The catalysed reaction is [pyruvate, water dikinase] + ADP = [pyruvate, water dikinase]-phosphate + AMP + H(+). It carries out the reaction [pyruvate, water dikinase]-phosphate + phosphate + H(+) = [pyruvate, water dikinase] + diphosphate. Bifunctional serine/threonine kinase and phosphorylase involved in the regulation of the phosphoenolpyruvate synthase (PEPS) by catalyzing its phosphorylation/dephosphorylation. The chain is Putative phosphoenolpyruvate synthase regulatory protein from Pseudoalteromonas atlantica (strain T6c / ATCC BAA-1087).